The primary structure comprises 127 residues: Glycine cleavage system H protein (127 aa).

Positions 22–104 constitute a Lipoyl-binding domain; the sequence is EVVIGITHFA…YEGAWMVKVE (83 aa). At lysine 63 the chain carries N6-lipoyllysine.

This sequence belongs to the GcvH family. In terms of assembly, the glycine cleavage system is composed of four proteins: P, T, L and H. It depends on (R)-lipoate as a cofactor.

Its function is as follows. The glycine cleavage system catalyzes the degradation of glycine. The H protein shuttles the methylamine group of glycine from the P protein to the T protein. Functionally, is also involved in protein lipoylation via its role as an octanoyl/lipoyl carrier protein intermediate. The protein is Glycine cleavage system H protein of Bacillus cereus (strain ZK / E33L).